The following is a 442-amino-acid chain: MSPHPGDRVRVERADVTNEGILMPSSTSDHLVIKLDGGYNVGIDRADASIDLVTSDAYDIGGTQTDIGSSAGAGADTEADKTESDITSKSAASAVAFDESLPTVSLISTGGTIASTVDYRTGAVTAQFDAEDVLRAVPDLAGRANYRGRVVRNILSENMTPAVWQDLAAAVADEIRAGADGVVVMHGTDTMQYSASALSYMLDTPVPVVFTGSQRSADRPSSDNVMNAVCAVEAATADISGVFVCMHASTADDTCALHRGTRVRKNHTSRRDAFKTVGATPIGKIEYDTETVSFHRDHAARESTELNLTSELNEDVMLLTFTPGMNIDRQTAFLTDSTPDGLIIAGTGLGHVHTEFIPTVAELVADGVVVAMTSQCIEGRVCDRVYDTGRDLLEAGVVEAGDTLPGTAKVKLMWALANHPDPTNAMRKSLAGELQHRSVPWE.

The disordered stretch occupies residues 63–84 (TQTDIGSSAGAGADTEADKTES). The Asparaginase/glutaminase domain occupies 102–429 (PTVSLISTGG…PDPTNAMRKS (328 aa)). Active-site residues include Thr112, Thr188, Asp189, and Lys265.

This sequence belongs to the asparaginase 1 family. GatD subfamily. As to quaternary structure, heterodimer of GatD and GatE.

It carries out the reaction L-glutamyl-tRNA(Gln) + L-glutamine + ATP + H2O = L-glutaminyl-tRNA(Gln) + L-glutamate + ADP + phosphate + H(+). Allows the formation of correctly charged Gln-tRNA(Gln) through the transamidation of misacylated Glu-tRNA(Gln) in organisms which lack glutaminyl-tRNA synthetase. The reaction takes place in the presence of glutamine and ATP through an activated gamma-phospho-Glu-tRNA(Gln). The GatDE system is specific for glutamate and does not act on aspartate. The protein is Glutamyl-tRNA(Gln) amidotransferase subunit D of Haloquadratum walsbyi (strain DSM 16790 / HBSQ001).